A 264-amino-acid chain; its full sequence is uncharacterized protein (264 aa).

The next 4 helical transmembrane spans lie at Val-43–Ile-63, Phe-68–Ile-88, Ile-96–Ile-116, and Leu-150–Val-170. Residues Ser-216 to Thr-247 are disordered. Over residues Ser-224 to Pro-237 the composition is skewed to low complexity.

It is found in the membrane. This is an uncharacterized protein from Caenorhabditis elegans.